A 107-amino-acid chain; its full sequence is Phosphoribosyl-ATP pyrophosphatase (107 aa).

It belongs to the PRA-PH family.

The protein resides in the cytoplasm. The enzyme catalyses 1-(5-phospho-beta-D-ribosyl)-ATP + H2O = 1-(5-phospho-beta-D-ribosyl)-5'-AMP + diphosphate + H(+). It functions in the pathway amino-acid biosynthesis; L-histidine biosynthesis; L-histidine from 5-phospho-alpha-D-ribose 1-diphosphate: step 2/9. In Clostridium tetani (strain Massachusetts / E88), this protein is Phosphoribosyl-ATP pyrophosphatase (hisE).